The sequence spans 327 residues: tRNA dimethylallyltransferase (327 aa).

14-21 (GPTASGKT) contacts ATP. Residue 16–21 (TASGKT) participates in substrate binding. 2 interaction with substrate tRNA regions span residues 39 to 42 (DSAL) and 163 to 167 (QRIQR).

Belongs to the IPP transferase family. In terms of assembly, monomer. The cofactor is Mg(2+).

It carries out the reaction adenosine(37) in tRNA + dimethylallyl diphosphate = N(6)-dimethylallyladenosine(37) in tRNA + diphosphate. Its function is as follows. Catalyzes the transfer of a dimethylallyl group onto the adenine at position 37 in tRNAs that read codons beginning with uridine, leading to the formation of N6-(dimethylallyl)adenosine (i(6)A). In Xanthomonas oryzae pv. oryzae (strain PXO99A), this protein is tRNA dimethylallyltransferase.